Reading from the N-terminus, the 84-residue chain is Turripeptide IX-03 (84 aa).

The signal sequence occupies residues 1 to 21 (MGFYMLLTVALLLTSLMNVEA). A propeptide spanning residues 22 to 39 (TPVDQAERSALEKSGLGN) is cleaved from the precursor. Disulfide bonds link Cys48-Cys70, Cys55-Cys74, and Cys60-Cys81.

As to expression, expressed by the venom duct.

The protein localises to the secreted. The protein is Turripeptide IX-03 of Gemmula speciosa (Splendid gem-turris).